The chain runs to 283 residues: Thymidylate synthase (283 aa).

A dUMP-binding site is contributed by arginine 33. Histidine 63 provides a ligand contact to (6R)-5,10-methylene-5,6,7,8-tetrahydrofolate. 138–139 (RR) lines the dUMP pocket. Catalysis depends on cysteine 158, which acts as the Nucleophile. DUMP is bound by residues 185–188 (RSAD), asparagine 196, and 226–228 (HIY). (6R)-5,10-methylene-5,6,7,8-tetrahydrofolate is bound at residue aspartate 188. (6R)-5,10-methylene-5,6,7,8-tetrahydrofolate is bound at residue alanine 282.

The protein belongs to the thymidylate synthase family. Bacterial-type ThyA subfamily. Homodimer.

Its subcellular location is the cytoplasm. The catalysed reaction is dUMP + (6R)-5,10-methylene-5,6,7,8-tetrahydrofolate = 7,8-dihydrofolate + dTMP. Its pathway is pyrimidine metabolism; dTTP biosynthesis. Catalyzes the reductive methylation of 2'-deoxyuridine-5'-monophosphate (dUMP) to 2'-deoxythymidine-5'-monophosphate (dTMP) while utilizing 5,10-methylenetetrahydrofolate (mTHF) as the methyl donor and reductant in the reaction, yielding dihydrofolate (DHF) as a by-product. This enzymatic reaction provides an intracellular de novo source of dTMP, an essential precursor for DNA biosynthesis. This Methylibium petroleiphilum (strain ATCC BAA-1232 / LMG 22953 / PM1) protein is Thymidylate synthase.